Reading from the N-terminus, the 317-residue chain is tRNA pseudouridine synthase B (317 aa).

Aspartate 47 acts as the Nucleophile in catalysis.

The protein belongs to the pseudouridine synthase TruB family. Type 1 subfamily.

It catalyses the reaction uridine(55) in tRNA = pseudouridine(55) in tRNA. Its function is as follows. Responsible for synthesis of pseudouridine from uracil-55 in the psi GC loop of transfer RNAs. This Shewanella sp. (strain ANA-3) protein is tRNA pseudouridine synthase B.